Reading from the N-terminus, the 409-residue chain is 1-deoxy-D-xylulose 5-phosphate reductoisomerase (409 aa).

NADPH-binding residues include Thr10, Gly11, Ser12, Ile13, Gly36, Arg37, Asn38, and Asn126. Position 127 (Lys127) interacts with 1-deoxy-D-xylulose 5-phosphate. Glu128 lines the NADPH pocket. Asp152 contributes to the Mn(2+) binding site. The 1-deoxy-D-xylulose 5-phosphate site is built by Ser153, Glu154, Ser190, and His213. Residue Glu154 participates in Mn(2+) binding. Residue Gly219 participates in NADPH binding. 1-deoxy-D-xylulose 5-phosphate is bound by residues Ser226, Asn231, Lys232, and Glu235. Glu235 is a binding site for Mn(2+).

It belongs to the DXR family. Mg(2+) serves as cofactor. It depends on Mn(2+) as a cofactor.

It catalyses the reaction 2-C-methyl-D-erythritol 4-phosphate + NADP(+) = 1-deoxy-D-xylulose 5-phosphate + NADPH + H(+). It functions in the pathway isoprenoid biosynthesis; isopentenyl diphosphate biosynthesis via DXP pathway; isopentenyl diphosphate from 1-deoxy-D-xylulose 5-phosphate: step 1/6. Functionally, catalyzes the NADPH-dependent rearrangement and reduction of 1-deoxy-D-xylulose-5-phosphate (DXP) to 2-C-methyl-D-erythritol 4-phosphate (MEP). The protein is 1-deoxy-D-xylulose 5-phosphate reductoisomerase of Prochlorococcus marinus (strain MIT 9515).